Consider the following 588-residue polypeptide: Intracellular maltogenic amylase (588 aa).

Positions 149, 155, 174, and 176 each coordinate Ca(2+). 2 residues coordinate substrate: histidine 249 and arginine 325. The active-site Nucleophile is aspartate 327. The active-site Proton donor is the glutamate 356. Residues 422 to 423 (HD), aspartate 467, and arginine 471 each bind substrate.

The protein belongs to the glycosyl hydrolase 13 family. BbmA subfamily. In terms of assembly, monomer or homodimer; in equilibrium. Requires Ca(2+) as cofactor.

Its subcellular location is the cytoplasm. Its function is as follows. Hydrolyzes beta-cyclodextrin to maltose and glucose, soluble starch to maltose and glucose, and pullulan to panose with trace amounts of maltose and glucose. It is also able to hydrolyze acarbose. Can also exhibit a transglycosylation activity transferring glucose or maltose to another moiety of sugars by forming alpha-(1,6)- and alpha-(1,3)-glycosidic linkages upon the hydrolysis of substrate at concentrations of 5% or higher. The protein is Intracellular maltogenic amylase (bbmA) of Bacillus subtilis.